We begin with the raw amino-acid sequence, 118 residues long: Large ribosomal subunit protein uL18 (118 aa).

The protein belongs to the universal ribosomal protein uL18 family. As to quaternary structure, part of the 50S ribosomal subunit; part of the 5S rRNA/L5/L18/L25 subcomplex. Contacts the 5S and 23S rRNAs.

In terms of biological role, this is one of the proteins that bind and probably mediate the attachment of the 5S RNA into the large ribosomal subunit, where it forms part of the central protuberance. The sequence is that of Large ribosomal subunit protein uL18 from Helicobacter pylori (strain J99 / ATCC 700824) (Campylobacter pylori J99).